The chain runs to 231 residues: 7-cyano-7-deazaguanine synthase (231 aa).

8-18 contacts ATP; it reads FSGGQDSTTCL. Positions 188, 197, 200, and 203 each coordinate Zn(2+).

The protein belongs to the QueC family. Requires Zn(2+) as cofactor.

The catalysed reaction is 7-carboxy-7-deazaguanine + NH4(+) + ATP = 7-cyano-7-deazaguanine + ADP + phosphate + H2O + H(+). Its pathway is purine metabolism; 7-cyano-7-deazaguanine biosynthesis. Catalyzes the ATP-dependent conversion of 7-carboxy-7-deazaguanine (CDG) to 7-cyano-7-deazaguanine (preQ(0)). The polypeptide is 7-cyano-7-deazaguanine synthase (Escherichia coli (strain ATCC 8739 / DSM 1576 / NBRC 3972 / NCIMB 8545 / WDCM 00012 / Crooks)).